The chain runs to 512 residues: Maturase K (512 aa).

The protein belongs to the intron maturase 2 family. MatK subfamily.

The protein resides in the plastid. Its subcellular location is the chloroplast. Usually encoded in the trnK tRNA gene intron. Probably assists in splicing its own and other chloroplast group II introns. The chain is Maturase K from Lemna gibba (Swollen duckweed).